The following is a 215-amino-acid chain: Probable transaldolase (215 aa).

Catalysis depends on Lys-83, which acts as the Schiff-base intermediate with substrate.

The protein belongs to the transaldolase family. Type 3B subfamily.

The protein localises to the cytoplasm. The enzyme catalyses D-sedoheptulose 7-phosphate + D-glyceraldehyde 3-phosphate = D-erythrose 4-phosphate + beta-D-fructose 6-phosphate. It functions in the pathway carbohydrate degradation; pentose phosphate pathway; D-glyceraldehyde 3-phosphate and beta-D-fructose 6-phosphate from D-ribose 5-phosphate and D-xylulose 5-phosphate (non-oxidative stage): step 2/3. Its function is as follows. Transaldolase is important for the balance of metabolites in the pentose-phosphate pathway. The sequence is that of Probable transaldolase from Streptococcus agalactiae serotype III (strain NEM316).